The chain runs to 259 residues: MAIQSTRRLRRASSLLKKSKPYNKEKTNLSLSLSLKELHSVFKLFPEYELKFLNMMKLPITGKEPIKIPFDLSLHHQHTCLDLSPYANEQVSKSACVNCGTTNIPTASDAMVAYMNQISNVMQNRLYYYGFQKKVELIRMSAKQPTLFQIFYILSSIASNFLPIMFENNEKLNMYVVFQTRTLHIPCECINQIMTVSSGYTVLLDILHDSIVLHVLCKTIETSNIQIDINVLQRKIEEMDVPDEIGDKFEKLKHILPFI.

The CCCH-type zinc finger occupies 80–184 (CLDLSPYANE…YVVFQTRTLH (105 aa)).

It belongs to the herpesviridae NEC1 protein family. In terms of assembly, forms a heterohexameric complex with NEC2. Interacts with capsid vertex specific component 2/CVC2; this interaction directs the capsid to the host inner nuclear membrane to initiate budding. Post-translationally, phosphorylated at serine residues in the N-terminus. This phosphorylation regulates the localization within the inner nuclear membrane.

The protein localises to the host nucleus inner membrane. Plays an essential role in virion nuclear egress, the first step of virion release from infected cell. Within the host nucleus, NEC1 interacts with the newly formed capsid through the vertexes and directs it to the inner nuclear membrane by associating with NEC2. Induces the budding of the capsid at the inner nuclear membrane as well as its envelopment into the perinuclear space. There, the NEC1/NEC2 complex promotes the fusion of the enveloped capsid with the outer nuclear membrane and the subsequent release of the viral capsid into the cytoplasm where it will reach the secondary budding sites in the host Golgi or trans-Golgi network. The polypeptide is Nuclear egress protein 1 (Homo sapiens (Human)).